We begin with the raw amino-acid sequence, 273 residues long: Undecaprenyl-diphosphatase (273 aa).

8 helical membrane-spanning segments follow: residues 13-35, 45-65, 90-110, 116-136, 157-177, 190-210, 222-242, and 252-272; these read LGVVEGLTEFLPVSSTGHMIIVG, ANTFEVVIQLGSILAVVVMFW, LSLIHILLGMIPAVVMGLIFH, LFNPVNVMYALIVGGVLLIAA, AFVIGCFQCLALWPGFSRSGA, YAASEFSFLLAVPMMMGATVL, GDVPMFAVGFVMAFIVALIAI, and ISFIPFAIYRFIVAAAVYVVF.

It belongs to the UppP family.

It localises to the cell inner membrane. The enzyme catalyses di-trans,octa-cis-undecaprenyl diphosphate + H2O = di-trans,octa-cis-undecaprenyl phosphate + phosphate + H(+). In terms of biological role, catalyzes the dephosphorylation of undecaprenyl diphosphate (UPP). Confers resistance to bacitracin. The sequence is that of Undecaprenyl-diphosphatase from Klebsiella pneumoniae subsp. pneumoniae (strain ATCC 700721 / MGH 78578).